A 428-amino-acid chain; its full sequence is Histidinol dehydrogenase (428 aa).

NAD(+)-binding residues include Tyr-127, Gln-185, and Asn-208. Residues Ser-234, Gln-256, and His-259 each contribute to the substrate site. The Zn(2+) site is built by Gln-256 and His-259. Residues Glu-323 and His-324 each act as proton acceptor in the active site. Residues His-324, Asp-357, Glu-411, and His-416 each coordinate substrate. Asp-357 is a binding site for Zn(2+). His-416 is a Zn(2+) binding site.

It belongs to the histidinol dehydrogenase family. It depends on Zn(2+) as a cofactor.

The catalysed reaction is L-histidinol + 2 NAD(+) + H2O = L-histidine + 2 NADH + 3 H(+). It participates in amino-acid biosynthesis; L-histidine biosynthesis; L-histidine from 5-phospho-alpha-D-ribose 1-diphosphate: step 9/9. Its function is as follows. Catalyzes the sequential NAD-dependent oxidations of L-histidinol to L-histidinaldehyde and then to L-histidine. This Mannheimia succiniciproducens (strain KCTC 0769BP / MBEL55E) protein is Histidinol dehydrogenase.